Reading from the N-terminus, the 122-residue chain is RxLR effector protein Avh52 (122 aa).

Residues 1 to 21 (MRLTSILVLVIAATFHTTGTA) form the signal peptide. Positions 50 to 68 (RLLRRVEKDKVDYEQDEQR) match the RxLR-dEER motif. The segment at 69–86 (SFGALKDAVKKLNPVTAV) is TAP1-binding. The interval 87 to 98 (KKFFKQRARRKK) is nuclear localization signal (NLS).

It belongs to the RxLR effector family. As to quaternary structure, interacts with host acetyl transferase TAP1.

The protein resides in the secreted. Its subcellular location is the host nucleus. Its function is as follows. Effector that suppresses plant defense responses during the early stages of pathogen infection. Suppresses cell death induced by effectors and PAMPs in plant hosts. Interacts with host acetyltransferase TAP1 and causes TAP1 relocation into the nucleus where it acetylates histones H2A and H3 during early infection, thereby promoting susceptibility of host plant to P.sojae. The protein is RxLR effector protein Avh52 of Phytophthora sojae (Soybean stem and root rot agent).